We begin with the raw amino-acid sequence, 508 residues long: 2,3-bisphosphoglycerate-independent phosphoglycerate mutase (508 aa).

2 residues coordinate Mn(2+): Asp14 and Ser64. The active-site Phosphoserine intermediate is the Ser64. Substrate-binding positions include His125, 155–156 (RD), Arg187, Arg193, 259–262 (RADR), and Lys332. Residues Asp399, His403, Asp440, His441, and His459 each contribute to the Mn(2+) site.

This sequence belongs to the BPG-independent phosphoglycerate mutase family. Monomer. It depends on Mn(2+) as a cofactor.

It catalyses the reaction (2R)-2-phosphoglycerate = (2R)-3-phosphoglycerate. It functions in the pathway carbohydrate degradation; glycolysis; pyruvate from D-glyceraldehyde 3-phosphate: step 3/5. In terms of biological role, catalyzes the interconversion of 2-phosphoglycerate and 3-phosphoglycerate. The sequence is that of 2,3-bisphosphoglycerate-independent phosphoglycerate mutase from Pseudomonas fluorescens (strain Pf0-1).